Here is a 364-residue protein sequence, read N- to C-terminus: Chorismate synthase (364 aa).

Residues R48 and R54 each contribute to the NADP(+) site. FMN-binding positions include 129-131 (RSS), 243-244 (NA), G288, 303-307 (KPTSS), and R329.

It belongs to the chorismate synthase family. As to quaternary structure, homotetramer. FMNH2 serves as cofactor.

The enzyme catalyses 5-O-(1-carboxyvinyl)-3-phosphoshikimate = chorismate + phosphate. Its pathway is metabolic intermediate biosynthesis; chorismate biosynthesis; chorismate from D-erythrose 4-phosphate and phosphoenolpyruvate: step 7/7. Functionally, catalyzes the anti-1,4-elimination of the C-3 phosphate and the C-6 proR hydrogen from 5-enolpyruvylshikimate-3-phosphate (EPSP) to yield chorismate, which is the branch point compound that serves as the starting substrate for the three terminal pathways of aromatic amino acid biosynthesis. This reaction introduces a second double bond into the aromatic ring system. The sequence is that of Chorismate synthase from Chelativorans sp. (strain BNC1).